A 147-amino-acid chain; its full sequence is Hemoglobin anodic subunit beta (147 aa).

The Globin domain occupies 2–147 (EWTDGERTAI…VTSALARQYH (146 aa)). The heme b site is built by His-63 and His-92.

It belongs to the globin family. In terms of assembly, heterotetramer of two alpha chains and two beta chains. As to expression, red blood cells.

Involved in oxygen transport from gills to the various peripheral tissues. The polypeptide is Hemoglobin anodic subunit beta (Gymnothorax unicolor (Brown moray)).